The sequence spans 602 residues: Proteasome-associated ATPase (602 aa).

Residues 1–13 (MQHDLPGGRHDEA) are compositionally biased toward basic and acidic residues. A disordered region spans residues 1-33 (MQHDLPGGRHDEADSSETGGAGTTENPSSEQAR). The segment covering 23-32 (TTENPSSEQA) has biased composition (polar residues). The stretch at 28-103 (SSEQARQIRF…LREEVDRLAQ (76 aa)) forms a coiled coil. Position 291-296 (291-296 (GCGKTL)) interacts with ATP. A docks into pockets in the proteasome alpha-ring region spans residues 601-602 (YL).

This sequence belongs to the AAA ATPase family. As to quaternary structure, homohexamer. Assembles into a hexameric ring structure that caps the 20S proteasome core. Strongly interacts with the prokaryotic ubiquitin-like protein Pup through a hydrophobic interface; the interacting region of ARC lies in its N-terminal coiled-coil domain. There is one Pup binding site per ARC hexamer ring. Upon ATP-binding, the C-terminus of ARC interacts with the alpha-rings of the proteasome core, possibly by binding to the intersubunit pockets.

It participates in protein degradation; proteasomal Pup-dependent pathway. Functionally, ATPase which is responsible for recognizing, binding, unfolding and translocation of pupylated proteins into the bacterial 20S proteasome core particle. May be essential for opening the gate of the 20S proteasome via an interaction with its C-terminus, thereby allowing substrate entry and access to the site of proteolysis. Thus, the C-termini of the proteasomal ATPase may function like a 'key in a lock' to induce gate opening and therefore regulate proteolysis. The chain is Proteasome-associated ATPase from Saccharomonospora viridis (strain ATCC 15386 / DSM 43017 / JCM 3036 / CCUG 5913 / NBRC 12207 / NCIMB 9602 / P101) (Thermoactinomyces viridis).